The primary structure comprises 207 residues: Small ribosomal subunit protein uS4 (207 aa).

The segment at Asp-30–Gly-53 is disordered. Over residues Gly-42–Phe-52 the composition is skewed to polar residues. Residues Ser-97–Val-157 form the S4 RNA-binding domain.

The protein belongs to the universal ribosomal protein uS4 family. Part of the 30S ribosomal subunit. Contacts protein S5. The interaction surface between S4 and S5 is involved in control of translational fidelity.

In terms of biological role, one of the primary rRNA binding proteins, it binds directly to 16S rRNA where it nucleates assembly of the body of the 30S subunit. Functionally, with S5 and S12 plays an important role in translational accuracy. This Delftia acidovorans (strain DSM 14801 / SPH-1) protein is Small ribosomal subunit protein uS4.